We begin with the raw amino-acid sequence, 240 residues long: Ubiquinone biosynthesis O-methyltransferase (240 aa).

The S-adenosyl-L-methionine site is built by Arg44, Gly64, Asp85, and Met129.

The protein belongs to the methyltransferase superfamily. UbiG/COQ3 family.

The enzyme catalyses a 3-demethylubiquinol + S-adenosyl-L-methionine = a ubiquinol + S-adenosyl-L-homocysteine + H(+). It catalyses the reaction a 3-(all-trans-polyprenyl)benzene-1,2-diol + S-adenosyl-L-methionine = a 2-methoxy-6-(all-trans-polyprenyl)phenol + S-adenosyl-L-homocysteine + H(+). It participates in cofactor biosynthesis; ubiquinone biosynthesis. Its function is as follows. O-methyltransferase that catalyzes the 2 O-methylation steps in the ubiquinone biosynthetic pathway. The polypeptide is Ubiquinone biosynthesis O-methyltransferase (Escherichia coli O9:H4 (strain HS)).